The chain runs to 206 residues: Testis-expressed protein 38 (206 aa).

The helical transmembrane segment at 15 to 35 (VSLYFGILGLCSVITGGCIIF) threads the bilayer.

The protein localises to the membrane. The polypeptide is Testis-expressed protein 38 (TEX38) (Homo sapiens (Human)).